Consider the following 305-residue polypeptide: MQRQELQQKKIAVLMGGLSAEREVSLRTGKAISQALTRCGYEVTDIDAGRDLAQQLEKTGVEVAFIALHGRFGEDGTVQGLLELADIPYTGSGVLASSLAMDKVATKKMLCYHGIATPGFAVMRRGQKICGTLPDYPLVVKPAREGSTIGISIVHDEQELAAGLEEAFRHDDLVLVEQFIAGAEVTVGVLDGQPLPIIQVVPKGGFYDYQSKYTPGQTEYLLPAPLPETLYGALQDSAVRVFEAIGCCGAARVDFMVTDTGFYCLEVNTIPGMTETSLLPKAANAVGMSFDELVERILAGASLRK.

The 193-residue stretch at 107-299 folds into the ATP-grasp domain; the sequence is KKMLCYHGIA…FDELVERILA (193 aa). 134-186 is an ATP binding site; it reads PDYPLVVKPAREGSTIGISIVHDEQELAAGLEEAFRHDDLVLVEQFIAGAEVT. The Mg(2+) site is built by Asp254, Glu266, and Asn268.

Belongs to the D-alanine--D-alanine ligase family. It depends on Mg(2+) as a cofactor. Requires Mn(2+) as cofactor.

It is found in the cytoplasm. The catalysed reaction is 2 D-alanine + ATP = D-alanyl-D-alanine + ADP + phosphate + H(+). It functions in the pathway cell wall biogenesis; peptidoglycan biosynthesis. Its function is as follows. Cell wall formation. The chain is D-alanine--D-alanine ligase from Syntrophotalea carbinolica (strain DSM 2380 / NBRC 103641 / GraBd1) (Pelobacter carbinolicus).